The sequence spans 344 residues: Golgi-associated RAB2 interactor protein 1B (344 aa).

The segment at 271–293 is disordered; that stretch reads FRSSRKVETNKNSSGKDSSREDS.

This sequence belongs to the GARIN family.

Its subcellular location is the golgi apparatus. Functionally, RAB2B effector protein required for accurate acrosome formation and normal male fertility. In complex with RAB2A/RAB2B, seems to suppress excessive vesicle trafficking during acrosome formation. In Homo sapiens (Human), this protein is Golgi-associated RAB2 interactor protein 1B.